Reading from the N-terminus, the 606-residue chain is ATP-dependent rRNA helicase SPB4 (606 aa).

The Q motif motif lies at 7 to 35 (WDNLGFSLLPWIRTGLDVMGFETMTPVQA). Residues 38–224 (IPMLAGNKDV…KTGLRNPVRI (187 aa)) form the Helicase ATP-binding domain. 51–58 (SVTGSGKT) contributes to the ATP binding site. Residues 172–175 (DEAD) carry the DEAD box motif. The region spanning 248–404 (KLQLLVSILN…ELDLEVKGIT (157 aa)) is the Helicase C-terminal domain. Ser-254 bears the Phosphoserine mark. Positions 539 to 582 (KTLTKERKLERKEKMSLKRKAIEEELKAEELDENAEEERIKEDW) form a coiled coil.

It belongs to the DEAD box helicase family. DDX55/SPB4 subfamily. In terms of assembly, component of pre-60S ribosomal complexes.

The protein resides in the nucleus. Its subcellular location is the nucleolus. The enzyme catalyses ATP + H2O = ADP + phosphate + H(+). Functionally, ATP-binding RNA helicase involved in the biogenesis of 60S ribosomal subunits. Binds 90S pre-ribosomal particles and dissociates from pre-60S ribosomal particles after processing of 27SB pre-rRNA. Required for the normal formation of 18S rRNA through the processing of pre-rRNAs at sites A0, A1 and A2, and the normal formation of 25S and 5.8S rRNAs through the processing of pre-rRNAs at sites C1 and C2. Also required for recruitment of NOG2 to pre-ribosomes. In Saccharomyces cerevisiae (strain ATCC 204508 / S288c) (Baker's yeast), this protein is ATP-dependent rRNA helicase SPB4.